A 473-amino-acid chain; its full sequence is Deoxyribodipyrimidine photo-lyase (473 aa).

Residues P2–I134 form the Photolyase/cryptochrome alpha/beta domain. N109 and E110 together coordinate (6R)-5,10-methylene-5,6,7,8-tetrahydrofolate. Y224 lines the FAD pocket. R228 lines the DNA pocket. T236–S240 provides a ligand contact to FAD. 2 interaction with DNA regions span residues E276 to Y283 and N343 to R344. D374–D376 is an FAD binding site. Position 406 (Q406) interacts with DNA.

Belongs to the DNA photolyase class-1 family. Monomer. FAD is required as a cofactor. It depends on (6R)-5,10-methylene-5,6,7,8-tetrahydrofolate as a cofactor.

It carries out the reaction cyclobutadipyrimidine (in DNA) = 2 pyrimidine residues (in DNA).. Involved in repair of UV radiation-induced DNA damage. Catalyzes the light-dependent monomerization (300-600 nm) of cyclobutyl pyrimidine dimers (in cis-syn configuration), which are formed between adjacent bases on the same DNA strand upon exposure to ultraviolet radiation. The sequence is that of Deoxyribodipyrimidine photo-lyase (phrB) from Salmonella typhimurium (strain LT2 / SGSC1412 / ATCC 700720).